Here is a 66-residue protein sequence, read N- to C-terminus: uncharacterized protein (66 aa).

2 helical membrane passes run 5 to 25 and 30 to 50; these read ALIV…PLVN and IMFG…VTPL.

The protein localises to the cell membrane. This is an uncharacterized protein from Bacillus subtilis (strain 168).